Here is a 348-residue protein sequence, read N- to C-terminus: Protein RecA (348 aa).

67–74 (GPESSGKT) provides a ligand contact to ATP.

It belongs to the RecA family.

It is found in the cytoplasm. Functionally, can catalyze the hydrolysis of ATP in the presence of single-stranded DNA, the ATP-dependent uptake of single-stranded DNA by duplex DNA, and the ATP-dependent hybridization of homologous single-stranded DNAs. It interacts with LexA causing its activation and leading to its autocatalytic cleavage. The chain is Protein RecA from Cutibacterium acnes (Propionibacterium acnes).